We begin with the raw amino-acid sequence, 537 residues long: MEVRVRYAPSPTGLQHIGGIRTALFNFLFARAHAGVFVLRVEDTDRSRCTAAFEQNLYDTLRWLGVSWDEGGGCPETAVKQGARGDGRSVAHAGGAYGPYTQSARTDLYRAQVARLVETGQAYYCFCDASRLERVRKIRTLNRMPPGYDRHCRELLPEEVRECLASGVPHVIRFKVPLEGSTHFRDALLGDIEWQNEEINPDPILLKSDGFPTYHLANVVDDHAMRITHVLRAQEWVPSTPLHLLLYRAFGWQPPLFCHLPMVMGADGHKLSKRHGATSCDEFRNAGYLPEALLNYVAMLGCSYGEGQDLFTREQLCAHFSLSRLNKSPAVFDYKKLAWFNGQYIRAKSDEQLCALVWPFIANAGVCGHIPADVEAGAVRTRRFADEAPCAPTEAQRSMLMRVIPLIKERLRFLTDAPELVRCFFQEPSLPEQGVFVPKRLDVAQVRAVLVRARGLVHEIVSASEPDVEVLLRAEAEKFGIKLGDFLMPIRVALTGATVSAPLVGTIRILGASRSCARIEHVIRERFSDDSQGVGGG.

Residues 9–19 carry the 'HIGH' region motif; that stretch reads PSPTGLQHIGG. Zn(2+)-binding residues include C125, C127, C152, and E154. The short motif at 270–274 is the 'KMSKS' region element; it reads KLSKR. An ATP-binding site is contributed by K273.

This sequence belongs to the class-I aminoacyl-tRNA synthetase family. Glutamate--tRNA ligase type 1 subfamily. In terms of assembly, monomer. Zn(2+) is required as a cofactor.

The protein resides in the cytoplasm. It carries out the reaction tRNA(Glu) + L-glutamate + ATP = L-glutamyl-tRNA(Glu) + AMP + diphosphate. Its function is as follows. Catalyzes the attachment of glutamate to tRNA(Glu) in a two-step reaction: glutamate is first activated by ATP to form Glu-AMP and then transferred to the acceptor end of tRNA(Glu). In Treponema pallidum (strain Nichols), this protein is Glutamate--tRNA ligase.